We begin with the raw amino-acid sequence, 351 residues long: Ribosomal RNA large subunit methyltransferase M (351 aa).

S-adenosyl-L-methionine is bound by residues Ser186, 219 to 222 (APGG), Asp238, Asp258, and Asp274. Lys303 (proton acceptor) is an active-site residue.

It belongs to the class I-like SAM-binding methyltransferase superfamily. RNA methyltransferase RlmE family. RlmM subfamily. In terms of assembly, monomer.

The protein resides in the cytoplasm. It catalyses the reaction cytidine(2498) in 23S rRNA + S-adenosyl-L-methionine = 2'-O-methylcytidine(2498) in 23S rRNA + S-adenosyl-L-homocysteine + H(+). In terms of biological role, catalyzes the 2'-O-methylation at nucleotide C2498 in 23S rRNA. The chain is Ribosomal RNA large subunit methyltransferase M from Xylella fastidiosa (strain M12).